The chain runs to 178 residues: Protein GrpE (178 aa).

It belongs to the GrpE family. As to quaternary structure, homodimer.

It is found in the cytoplasm. In terms of biological role, participates actively in the response to hyperosmotic and heat shock by preventing the aggregation of stress-denatured proteins, in association with DnaK and GrpE. It is the nucleotide exchange factor for DnaK and may function as a thermosensor. Unfolded proteins bind initially to DnaJ; upon interaction with the DnaJ-bound protein, DnaK hydrolyzes its bound ATP, resulting in the formation of a stable complex. GrpE releases ADP from DnaK; ATP binding to DnaK triggers the release of the substrate protein, thus completing the reaction cycle. Several rounds of ATP-dependent interactions between DnaJ, DnaK and GrpE are required for fully efficient folding. This Rickettsia prowazekii (strain Madrid E) protein is Protein GrpE.